Consider the following 158-residue polypeptide: 6,7-dimethyl-8-ribityllumazine synthase (158 aa).

Residues tryptophan 28, 59 to 61, and 81 to 83 contribute to the 5-amino-6-(D-ribitylamino)uracil site; these read TVE and VVV. 86 to 87 serves as a coordination point for (2S)-2-hydroxy-3-oxobutyl phosphate; that stretch reads DT. The active-site Proton donor is histidine 89. A 5-amino-6-(D-ribitylamino)uracil-binding site is contributed by phenylalanine 114. Arginine 128 lines the (2S)-2-hydroxy-3-oxobutyl phosphate pocket.

It belongs to the DMRL synthase family.

The catalysed reaction is (2S)-2-hydroxy-3-oxobutyl phosphate + 5-amino-6-(D-ribitylamino)uracil = 6,7-dimethyl-8-(1-D-ribityl)lumazine + phosphate + 2 H2O + H(+). Its pathway is cofactor biosynthesis; riboflavin biosynthesis; riboflavin from 2-hydroxy-3-oxobutyl phosphate and 5-amino-6-(D-ribitylamino)uracil: step 1/2. Functionally, catalyzes the formation of 6,7-dimethyl-8-ribityllumazine by condensation of 5-amino-6-(D-ribitylamino)uracil with 3,4-dihydroxy-2-butanone 4-phosphate. This is the penultimate step in the biosynthesis of riboflavin. In Micrococcus luteus (strain ATCC 4698 / DSM 20030 / JCM 1464 / CCM 169 / CCUG 5858 / IAM 1056 / NBRC 3333 / NCIMB 9278 / NCTC 2665 / VKM Ac-2230) (Micrococcus lysodeikticus), this protein is 6,7-dimethyl-8-ribityllumazine synthase.